The sequence spans 60 residues: DNA gyrase inhibitor YacG (60 aa).

Zn(2+) is bound by residues C15, C18, C30, and C34.

The protein belongs to the DNA gyrase inhibitor YacG family. Interacts with GyrB. It depends on Zn(2+) as a cofactor.

Functionally, inhibits all the catalytic activities of DNA gyrase by preventing its interaction with DNA. Acts by binding directly to the C-terminal domain of GyrB, which probably disrupts DNA binding by the gyrase. The chain is DNA gyrase inhibitor YacG from Bradyrhizobium diazoefficiens (strain JCM 10833 / BCRC 13528 / IAM 13628 / NBRC 14792 / USDA 110).